The chain runs to 515 residues: 2-isopropylmalate synthase (515 aa).

The Pyruvate carboxyltransferase domain occupies 5–267; it reads VIIFDTTLRD…HTNLKHDEIH (263 aa). Residues Asp-14, His-202, His-204, and Asn-238 each contribute to the Mn(2+) site. Positions 392-515 are regulatory domain; sequence KLNYLSVQSG…EIKQKKVETV (124 aa).

Belongs to the alpha-IPM synthase/homocitrate synthase family. LeuA type 1 subfamily. In terms of assembly, homodimer. Requires Mn(2+) as cofactor.

It is found in the cytoplasm. The enzyme catalyses 3-methyl-2-oxobutanoate + acetyl-CoA + H2O = (2S)-2-isopropylmalate + CoA + H(+). The protein operates within amino-acid biosynthesis; L-leucine biosynthesis; L-leucine from 3-methyl-2-oxobutanoate: step 1/4. Catalyzes the condensation of the acetyl group of acetyl-CoA with 3-methyl-2-oxobutanoate (2-ketoisovalerate) to form 3-carboxy-3-hydroxy-4-methylpentanoate (2-isopropylmalate). The polypeptide is 2-isopropylmalate synthase (Aliivibrio fischeri (strain MJ11) (Vibrio fischeri)).